A 317-amino-acid chain; its full sequence is Putative HTH-type transcriptional regulatory protein Mboo_0195 (317 aa).

Residues 132–185 enclose the HTH cro/C1-type domain; sequence LRELRERRSMSLGDLGQVLGVSRRTISKYESGMGTTLEVAIRIEEYFNTGVVES. The H-T-H motif DNA-binding region spans 143-162; that stretch reads LGDLGQVLGVSRRTISKYES.

The sequence is that of Putative HTH-type transcriptional regulatory protein Mboo_0195 from Methanoregula boonei (strain DSM 21154 / JCM 14090 / 6A8).